A 539-amino-acid polypeptide reads, in one-letter code: O-phosphoserine--tRNA(Cys) ligase (539 aa).

Residues 188–190 (HMT), 233–235 (SAS), 275–276 (YY), and N327 each bind substrate.

Belongs to the class-II aminoacyl-tRNA synthetase family. O-phosphoseryl-tRNA(Cys) synthetase subfamily. As to quaternary structure, homotetramer. Interacts with SepCysS.

The catalysed reaction is tRNA(Cys) + O-phospho-L-serine + ATP = O-phospho-L-seryl-tRNA(Cys) + AMP + diphosphate. Functionally, catalyzes the attachment of O-phosphoserine (Sep) to tRNA(Cys). The sequence is that of O-phosphoserine--tRNA(Cys) ligase from Methanosarcina barkeri (strain Fusaro / DSM 804).